The primary structure comprises 196 residues: ATP-dependent Clp protease proteolytic subunit (196 aa).

The Nucleophile role is filled by Ser-101. The active site involves His-126.

The protein belongs to the peptidase S14 family. As to quaternary structure, component of the chloroplastic Clp protease core complex.

The protein resides in the plastid. The protein localises to the chloroplast stroma. It catalyses the reaction Hydrolysis of proteins to small peptides in the presence of ATP and magnesium. alpha-casein is the usual test substrate. In the absence of ATP, only oligopeptides shorter than five residues are hydrolyzed (such as succinyl-Leu-Tyr-|-NHMec, and Leu-Tyr-Leu-|-Tyr-Trp, in which cleavage of the -Tyr-|-Leu- and -Tyr-|-Trp bonds also occurs).. In terms of biological role, cleaves peptides in various proteins in a process that requires ATP hydrolysis. Has a chymotrypsin-like activity. Plays a major role in the degradation of misfolded proteins. In Aethionema cordifolium (Lebanon stonecress), this protein is ATP-dependent Clp protease proteolytic subunit.